A 38-amino-acid polypeptide reads, in one-letter code: MKVLASVKRICRNCKIIKRNGVVRVICSSDPRHKQRQG.

This sequence belongs to the bacterial ribosomal protein bL36 family.

This Cupriavidus metallidurans (strain ATCC 43123 / DSM 2839 / NBRC 102507 / CH34) (Ralstonia metallidurans) protein is Large ribosomal subunit protein bL36.